Here is a 509-residue protein sequence, read N- to C-terminus: Poly(A) RNA polymerase GLD2-A (509 aa).

The tract at residues 88–107 (PGSPSSSFQNRKRRSDEGNV) is disordered. Residues Asp-240 and Asp-242 each coordinate Mg(2+). Residues 409-462 (LGDLLLGFLKYFAVEFDWSKDIISVREGKALPRSDDYLWRNKYICVEEPFDGTN) enclose the PAP-associated domain.

Belongs to the DNA polymerase type-B-like family. GLD2 subfamily. Component of a complex at least composed of cpeb1, cpsf1, tent2/gld2, pabpc1/ePAB, parn and sympk. Following oocyte maturation, parn is expelled from the complex. Interacts with rbfox2 and sympk. Requires Mg(2+) as cofactor. Mn(2+) is required as a cofactor.

Its subcellular location is the cytoplasm. It catalyses the reaction RNA(n) + ATP = RNA(n)-3'-adenine ribonucleotide + diphosphate. Cytoplasmic poly(A) RNA polymerase that adds successive AMP monomers to the 3'-end of specific RNAs, forming a poly(A) tail. In contrast to the canonical nuclear poly(A) RNA polymerase, it only adds poly(A) to selected cytoplasmic mRNAs during oocyte maturation. Plays a central role during oocyte maturation by mediating polyadenylation of dormant mRNAs, which contain 5'AAUAAA-3' sequence in their 3'UTR. In immature oocytes, polyadenylation of poly(A) tails is counteracted by the ribonuclease parn. During maturation parn is excluded from the ribonucleoprotein complex, allowing poly(A) elongation and activation of mRNAs. May not play a role in replication-dependent histone mRNA degradation. This chain is Poly(A) RNA polymerase GLD2-A (tent2-a), found in Xenopus laevis (African clawed frog).